Here is a 368-residue protein sequence, read N- to C-terminus: Aspartate-semialdehyde dehydrogenase (368 aa).

NADP(+)-binding positions include 10 to 13 (RGMV), 37 to 38 (TS), and Gln-72. Phosphate is bound at residue Arg-101. Cys-134 acts as the Acyl-thioester intermediate in catalysis. NADP(+)-binding positions include 160–161 (SG) and Pro-191. Glu-239 serves as a coordination point for substrate. Lys-242 lines the phosphate pocket. Arg-266 contacts substrate. His-273 serves as the catalytic Proton acceptor. Gln-349 serves as a coordination point for NADP(+).

It belongs to the aspartate-semialdehyde dehydrogenase family. In terms of assembly, homodimer.

The catalysed reaction is L-aspartate 4-semialdehyde + phosphate + NADP(+) = 4-phospho-L-aspartate + NADPH + H(+). It functions in the pathway amino-acid biosynthesis; L-lysine biosynthesis via DAP pathway; (S)-tetrahydrodipicolinate from L-aspartate: step 2/4. It participates in amino-acid biosynthesis; L-methionine biosynthesis via de novo pathway; L-homoserine from L-aspartate: step 2/3. The protein operates within amino-acid biosynthesis; L-threonine biosynthesis; L-threonine from L-aspartate: step 2/5. Its function is as follows. Catalyzes the NADPH-dependent formation of L-aspartate-semialdehyde (L-ASA) by the reductive dephosphorylation of L-aspartyl-4-phosphate. The chain is Aspartate-semialdehyde dehydrogenase from Azotobacter vinelandii.